Reading from the N-terminus, the 460-residue chain is Chromosomal replication initiator protein DnaA 1 (460 aa).

Positions 1 to 68 are domain I, interacts with DnaA modulators; that stretch reads MRAWEEFLLL…KSGLVNNNNK (68 aa). The interval 68–102 is domain II; the sequence is KPIRVHVTSVDKAAPFYKEKQMQQEKTAYFTMHYG. The tract at residues 103–321 is domain III, AAA+ region; it reads SVNPEMTFSN…HALNLLAKRV (219 aa). Residues glycine 151, glycine 153, lysine 154, and threonine 155 each coordinate ATP. Positions 322-460 are domain IV, binds dsDNA; sequence MYKKLSHQLL…EFFPSEEMII (139 aa).

This sequence belongs to the DnaA family. Oligomerizes as a right-handed, spiral filament on DNA at oriC.

It localises to the cytoplasm. Functionally, plays an essential role in the initiation and regulation of chromosomal replication. ATP-DnaA binds to the origin of replication (oriC) to initiate formation of the DNA replication initiation complex once per cell cycle. Binds the DnaA box (a 9 base pair repeat at the origin) and separates the double-stranded (ds)DNA. Forms a right-handed helical filament on oriC DNA; dsDNA binds to the exterior of the filament while single-stranded (ss)DNA is stabiized in the filament's interior. The ATP-DnaA-oriC complex binds and stabilizes one strand of the AT-rich DNA unwinding element (DUE), permitting loading of DNA polymerase. After initiation quickly degrades to an ADP-DnaA complex that is not apt for DNA replication. Binds acidic phospholipids. In Chlamydia pneumoniae (Chlamydophila pneumoniae), this protein is Chromosomal replication initiator protein DnaA 1.